Reading from the N-terminus, the 695-residue chain is Polyribonucleotide nucleotidyltransferase (695 aa).

Mg(2+) contacts are provided by Asp486 and Asp492. Residues 553 to 612 (PRMIVFKINPEKIRDVIGKGGATIRALTEETGTTIDIVDDGTVKIFSADKADGQEAKRRV) enclose the KH domain. The S1 motif domain maps to 622–690 (GKIYEGRVSR…KQGRVRLSVK (69 aa)).

The protein belongs to the polyribonucleotide nucleotidyltransferase family. As to quaternary structure, component of the RNA degradosome, which is a multiprotein complex involved in RNA processing and mRNA degradation. Mg(2+) is required as a cofactor.

The protein localises to the cytoplasm. It catalyses the reaction RNA(n+1) + phosphate = RNA(n) + a ribonucleoside 5'-diphosphate. Functionally, involved in mRNA degradation. Catalyzes the phosphorolysis of single-stranded polyribonucleotides processively in the 3'- to 5'-direction. The sequence is that of Polyribonucleotide nucleotidyltransferase from Nitrosococcus oceani (strain ATCC 19707 / BCRC 17464 / JCM 30415 / NCIMB 11848 / C-107).